The primary structure comprises 147 residues: UPF0306 protein YhbP (147 aa).

This sequence belongs to the UPF0306 family.

The chain is UPF0306 protein YhbP from Escherichia fergusonii (strain ATCC 35469 / DSM 13698 / CCUG 18766 / IAM 14443 / JCM 21226 / LMG 7866 / NBRC 102419 / NCTC 12128 / CDC 0568-73).